Reading from the N-terminus, the 125-residue chain is MPSKDPESVIDKEIRKISARNDELIKQDGTLKREYTTLLRKVSSVITVLNSIDDADTGSAETELPRLISQATVEKVPELKWYNDQISLITEKLEDDEDIEVPEELMDAYTLYKETPLLYNDTHTP.

At Thr124 the chain carries Phosphothreonine.

Component of the chromatin-remodeling INO80 complex, at least composed of ARP4, ARP5, ARP8, RVB1, RVB2, TAF14, NHP10, IES1, IES3, IES4, IES6, ACT1, IES2, IES5 and INO80.

It localises to the nucleus. This Saccharomyces cerevisiae (strain ATCC 204508 / S288c) (Baker's yeast) protein is Ino eighty subunit 5 (IES5).